The sequence spans 287 residues: Transcription initiation factor IIB 1 (287 aa).

The TFIIB-type zinc finger occupies 3-31; sequence HPHRCPECDGTIRETDTEHVCADCGLVVT. Zn(2+) is bound by residues Cys-7, Cys-10, Cys-23, and Cys-26. Residues 40 to 53 show a composition bias toward basic and acidic residues; that stretch reads EWRTFSDDPDHAPE. The interval 40 to 63 is disordered; it reads EWRTFSDDPDHAPERTGAPLTRSR. 2 repeat units span residues 111-194 and 205-286.

The protein belongs to the TFIIB family.

Its function is as follows. Stabilizes TBP binding to an archaeal box-A promoter. Also responsible for recruiting RNA polymerase II to the pre-initiation complex (DNA-TBP-TFIIB). The protein is Transcription initiation factor IIB 1 of Halobacterium salinarum (strain ATCC 700922 / JCM 11081 / NRC-1) (Halobacterium halobium).